The following is a 671-amino-acid chain: K(+)-insensitive pyrophosphate-energized proton pump (671 aa).

The next 5 membrane-spanning stretches (helical) occupy residues 4–24, 57–77, 79–99, 128–148, and 156–176; these read LIFTAPLAGLISLTFAAFFAK, TIAVVSVIISLLILFLLDEGL, IAAGFLAGAISSAAAGYIGMS, AVTGLAVIGLALLGTSSLYIL, and VGFGFGASLISLFARAGGGIF. Lys-178 is a binding site for substrate. Mg(2+) is bound by residues Asp-181, Asp-185, Asn-208, and Asp-211. A run of 6 helical transmembrane segments spans residues 223-243, 249-269, 285-305, 310-330, 365-385, and 393-413; these read LFETYVVTSLAAMLLGSLIIG, VLYPLMLGSAAIFASIISVFF, GVGGSTVLSLIAFYYITGFLM, FFYVTVAGVVITVLMVIVTEY, TLVPAVVIAAGILVSYFIVGG, and LYGIAIASVAMLSTAGMIVAL. Asp-421 provides a ligand contact to Mg(2+). 4 consecutive transmembrane segments (helical) span residues 452-472, 490-510, 558-578, and 579-599; these read AVTKGYAIGSTALGALALFAD, VVLSGILLGAVLPFLFSAVMM, MAMPGFLAVIIPLLTGFFLGP, and EALAGLLTGLIVVGFMLALMM. The Ca(2+) site is built by Asp-607, Asp-633, and Asp-637. Lys-640 is a binding site for substrate. Residues 650 to 670 form a helical membrane-spanning segment; that stretch reads LIKVVNMVAILFSPLIIGGGF.

It belongs to the H(+)-translocating pyrophosphatase (TC 3.A.10) family. K(+)-insensitive subfamily. As to quaternary structure, homodimer. It depends on Mg(2+) as a cofactor.

Its subcellular location is the cell membrane. The catalysed reaction is diphosphate + H2O + H(+)(in) = 2 phosphate + 2 H(+)(out). Functionally, proton pump that utilizes the energy of pyrophosphate hydrolysis as the driving force for proton movement across the membrane. Generates a proton motive force. The protein is K(+)-insensitive pyrophosphate-energized proton pump of Methanosarcina mazei (strain ATCC BAA-159 / DSM 3647 / Goe1 / Go1 / JCM 11833 / OCM 88) (Methanosarcina frisia).